Here is a 35-residue protein sequence, read N- to C-terminus: Bacteriocin lactococcin-G subunit beta (35 aa).

In terms of assembly, bacteriocin activity requires interaction of alpha and beta peptides in a molar ratio of 7:1 or 8:1 respectively.

Functionally, kills Lactococci. The polypeptide is Bacteriocin lactococcin-G subunit beta (Lactococcus lactis subsp. lactis (Streptococcus lactis)).